A 286-amino-acid polypeptide reads, in one-letter code: Phosphatidylserine decarboxylase proenzyme (286 aa).

Active-site charge relay system; for autoendoproteolytic cleavage activity residues include aspartate 90, histidine 147, and serine 250. Residue serine 250 is the Schiff-base intermediate with substrate; via pyruvic acid; for decarboxylase activity of the active site. Serine 250 carries the post-translational modification Pyruvic acid (Ser); by autocatalysis.

This sequence belongs to the phosphatidylserine decarboxylase family. PSD-B subfamily. Prokaryotic type I sub-subfamily. Heterodimer of a large membrane-associated beta subunit and a small pyruvoyl-containing alpha subunit. It depends on pyruvate as a cofactor. Is synthesized initially as an inactive proenzyme. Formation of the active enzyme involves a self-maturation process in which the active site pyruvoyl group is generated from an internal serine residue via an autocatalytic post-translational modification. Two non-identical subunits are generated from the proenzyme in this reaction, and the pyruvate is formed at the N-terminus of the alpha chain, which is derived from the carboxyl end of the proenzyme. The autoendoproteolytic cleavage occurs by a canonical serine protease mechanism, in which the side chain hydroxyl group of the serine supplies its oxygen atom to form the C-terminus of the beta chain, while the remainder of the serine residue undergoes an oxidative deamination to produce ammonia and the pyruvoyl prosthetic group on the alpha chain. During this reaction, the Ser that is part of the protease active site of the proenzyme becomes the pyruvoyl prosthetic group, which constitutes an essential element of the active site of the mature decarboxylase.

Its subcellular location is the cell membrane. The enzyme catalyses a 1,2-diacyl-sn-glycero-3-phospho-L-serine + H(+) = a 1,2-diacyl-sn-glycero-3-phosphoethanolamine + CO2. Its pathway is phospholipid metabolism; phosphatidylethanolamine biosynthesis; phosphatidylethanolamine from CDP-diacylglycerol: step 2/2. Functionally, catalyzes the formation of phosphatidylethanolamine (PtdEtn) from phosphatidylserine (PtdSer). The chain is Phosphatidylserine decarboxylase proenzyme from Saccharophagus degradans (strain 2-40 / ATCC 43961 / DSM 17024).